Consider the following 72-residue polypeptide: Large ribosomal subunit protein bL31 (72 aa).

Zn(2+)-binding residues include Cys16, Cys18, Cys37, and Cys40.

The protein belongs to the bacterial ribosomal protein bL31 family. Type A subfamily. Part of the 50S ribosomal subunit. The cofactor is Zn(2+).

In terms of biological role, binds the 23S rRNA. In Buchnera aphidicola subsp. Acyrthosiphon pisum (strain Tuc7), this protein is Large ribosomal subunit protein bL31.